A 393-amino-acid chain; its full sequence is Phosphoglycerate kinase (393 aa).

Substrate is bound by residues 21 to 23 (DMN), Arg36, 59 to 62 (HLGR), Arg114, and Arg147. Residues Lys198, Glu320, and 346 to 349 (GGDT) contribute to the ATP site.

This sequence belongs to the phosphoglycerate kinase family. As to quaternary structure, monomer.

Its subcellular location is the cytoplasm. The enzyme catalyses (2R)-3-phosphoglycerate + ATP = (2R)-3-phospho-glyceroyl phosphate + ADP. It participates in carbohydrate degradation; glycolysis; pyruvate from D-glyceraldehyde 3-phosphate: step 2/5. The polypeptide is Phosphoglycerate kinase (Thiobacillus denitrificans (strain ATCC 25259 / T1)).